We begin with the raw amino-acid sequence, 196 residues long: MRFTENFERAKKEALMSLEIALRKGEVDEDIIPLLKKINSIENYFTTSSCSGRISVMEMPHFGDKVNAKWLGKWHREVSLYEVLEAIKKHRSGQLWFLVRSPILHVGAKTLEDAVKLVNLAVSCGFKYSNIKSISNKKLIVEIRSTERMDVLLGENGEIFVGEEYLNKIVEIANDQMRRFKEKLKRLESKINALNR.

This sequence belongs to the TYW3 family.

The enzyme catalyses 4-demethyl-7-[(3S)-3-amino-3-carboxypropyl]wyosine(37) in tRNA(Phe) + S-adenosyl-L-methionine = 7-[(3S)-3-amino-3-carboxypropyl]wyosine(37) in tRNA(Phe) + S-adenosyl-L-homocysteine + H(+). Its function is as follows. S-adenosyl-L-methionine-dependent methyltransferase that acts as a component of the wyosine derivatives biosynthesis pathway. Probably methylates N-4 position of wybutosine-86 to produce wybutosine-72. This Pyrococcus horikoshii (strain ATCC 700860 / DSM 12428 / JCM 9974 / NBRC 100139 / OT-3) protein is tRNA(Phe) 7-((3-amino-3-carboxypropyl)-4-demethylwyosine(37)-N(4))-methyltransferase 1.